The primary structure comprises 233 residues: Ribonuclease 3 (233 aa).

The RNase III domain maps to 8 to 135 (AQRFLEDKQL…VIGAIYLDQG (128 aa)). Residue Glu48 participates in Mg(2+) binding. Asp52 is an active-site residue. 2 residues coordinate Mg(2+): Asp121 and Glu124. Glu124 is a catalytic residue. The region spanning 161-230 (DYKSKLQELV…AQKVLQDNLV (70 aa)) is the DRBM domain.

It belongs to the ribonuclease III family. As to quaternary structure, homodimer. Mg(2+) serves as cofactor.

The protein resides in the cytoplasm. It carries out the reaction Endonucleolytic cleavage to 5'-phosphomonoester.. In terms of biological role, digests double-stranded RNA. Involved in the processing of primary rRNA transcript to yield the immediate precursors to the large and small rRNAs (23S and 16S). Processes some mRNAs, and tRNAs when they are encoded in the rRNA operon. Processes pre-crRNA and tracrRNA of type II CRISPR loci if present in the organism. The polypeptide is Ribonuclease 3 (Syntrophomonas wolfei subsp. wolfei (strain DSM 2245B / Goettingen)).